Reading from the N-terminus, the 375-residue chain is tRNA-specific 2-thiouridylase MnmA (375 aa).

ATP-binding positions include 17–24 (GMSGGVDS) and methionine 43. The segment at 103-105 (NPD) is interaction with target base in tRNA. The active-site Nucleophile is cysteine 108. A disulfide bond links cysteine 108 and cysteine 204. Glycine 132 serves as a coordination point for ATP. Residues 154 to 156 (KDQ) are interaction with tRNA. Cysteine 204 acts as the Cysteine persulfide intermediate in catalysis. Positions 316–317 (RY) are interaction with tRNA.

It belongs to the MnmA/TRMU family.

The protein localises to the cytoplasm. It carries out the reaction S-sulfanyl-L-cysteinyl-[protein] + uridine(34) in tRNA + AH2 + ATP = 2-thiouridine(34) in tRNA + L-cysteinyl-[protein] + A + AMP + diphosphate + H(+). Functionally, catalyzes the 2-thiolation of uridine at the wobble position (U34) of tRNA, leading to the formation of s(2)U34. This Stutzerimonas stutzeri (strain A1501) (Pseudomonas stutzeri) protein is tRNA-specific 2-thiouridylase MnmA.